The chain runs to 223 residues: Neurotrophic factor BDNF precursor form (223 aa).

Positions 1 to 5 are cleaved as a signal peptide; the sequence is SCMKA. Residues 6-114 constitute a propeptide that is removed on maturation; sequence APMKEVSIRG…AANMSMRVRR (109 aa). An N-linked (GlcNAc...) asparagine glycan is attached at asparagine 107. Disulfide bonds link cysteine 127/cysteine 194 and cysteine 172/cysteine 223.

Belongs to the NGF-beta family.

Its subcellular location is the secreted. Its function is as follows. Promotes the survival of neuronal populations that are all located either in the central nervous system or directly connected to it. This Charina bottae (Northern rubber boa) protein is Neurotrophic factor BDNF precursor form (BDNF).